A 605-amino-acid chain; its full sequence is Endonuclease 8-like 3 (605 aa).

The active-site Schiff-base intermediate with DNA; via amino nitrogen is Val-2. DNA is bound by residues Asn-192 and Arg-271. The FPG-type zinc finger occupies 247–281; it reads KVYKRPNCGQCHCRITVCRFGDNNRMTYFCPHCQK. The RanBP2-type zinc finger occupies 317-346; the sequence is SEEHWTCVVCTLINKPSSKACDACLTSRPI. Ser-450 carries the post-translational modification Phosphoserine. Residues 456–477 are disordered; that stretch reads ESKLFSPAHKKPKTAQYSSPEL. Zn(2+) is bound by residues Cys-507, His-510, Cys-533, Cys-541, Cys-554, His-556, Cys-579, and Cys-587. 2 GRF-type zinc fingers span residues 507-550 and 554-596; these read CSKH…ADLS and CNHG…AENG.

Belongs to the FPG family. Expressed in keratinocytes and embryonic fibroblasts (at protein level). Also detected in thymus, testis and fetal lung primary fibroblasts.

The protein localises to the nucleus. It is found in the chromosome. It catalyses the reaction 2'-deoxyribonucleotide-(2'-deoxyribose 5'-phosphate)-2'-deoxyribonucleotide-DNA = a 3'-end 2'-deoxyribonucleotide-(2,3-dehydro-2,3-deoxyribose 5'-phosphate)-DNA + a 5'-end 5'-phospho-2'-deoxyribonucleoside-DNA + H(+). DNA glycosylase which prefers single-stranded DNA (ssDNA), or partially ssDNA structures such as bubble and fork structures, to double-stranded DNA (dsDNA). Mediates interstrand cross-link repair in response to replication stress: acts by mediating DNA glycosylase activity, cleaving one of the two N-glycosyl bonds comprising the interstrand cross-link, which avoids the formation of a double-strand break but generates an abasic site that is bypassed by translesion synthesis polymerases. In vitro, displays strong glycosylase activity towards the hydantoin lesions spiroiminodihydantoin (Sp) and guanidinohydantoin (Gh) in both ssDNA and dsDNA; also recognizes FapyA, FapyG, 5-OHU, 5-OHC, 5-OHMH, Tg and 8-oxoA lesions in ssDNA. No activity on 8-oxoG detected. Also shows weak DNA-(apurinic or apyrimidinic site) lyase activity. In vivo, appears to be the primary enzyme involved in removing Sp and Gh from ssDNA in neonatal tissues. The sequence is that of Endonuclease 8-like 3 (NEIL3) from Homo sapiens (Human).